The following is a 121-amino-acid chain: Small ribosomal subunit protein bS6 (121 aa).

A disordered region spans residues proline 99–alanine 121. The span at asparagine 105–glutamine 115 shows a compositional bias: basic and acidic residues.

Belongs to the bacterial ribosomal protein bS6 family.

In terms of biological role, binds together with bS18 to 16S ribosomal RNA. The protein is Small ribosomal subunit protein bS6 of Polaromonas naphthalenivorans (strain CJ2).